A 477-amino-acid polypeptide reads, in one-letter code: Pentatricopeptide repeat-containing protein At5g47360 (477 aa).

PPR repeat units lie at residues 129 to 163 (NVKT…NVCA), 164 to 198 (DTVA…GLYP), 199 to 233 (DVIT…DCVL), 234 to 264 (NSVT…MEKE), 273 to 307 (NAVT…GCMP), 308 to 343 (NRVT…GGVS), 344 to 378 (LSEC…GVRP), 379 to 413 (DGLA…DVKS), and 416 to 450 (DSDI…KMRL).

This sequence belongs to the PPR family. P subfamily.

In Arabidopsis thaliana (Mouse-ear cress), this protein is Pentatricopeptide repeat-containing protein At5g47360.